Reading from the N-terminus, the 206-residue chain is GTP-binding protein YPTC5 (206 aa).

Residue 15-22 (GDSGVGKT) participates in GTP binding. Positions 37–45 (YKATIGADF) match the Effector region motif. GTP is bound by residues 63 to 67 (DTAGQ) and 125 to 128 (NKID). 2 S-geranylgeranyl cysteine lipidation sites follow: C205 and C206.

The protein belongs to the small GTPase superfamily. Rab family.

It localises to the cell membrane. Functionally, protein transport. Probably involved in vesicular traffic. The chain is GTP-binding protein YPTC5 (YPTC5) from Chlamydomonas reinhardtii (Chlamydomonas smithii).